The chain runs to 387 residues: Formate-dependent phosphoribosylglycinamide formyltransferase (387 aa).

Residues 15-16 (EL) and Glu75 each bind N(1)-(5-phospho-beta-D-ribosyl)glycinamide. Residues Arg106, Lys147, 152–157 (SSGKGQ), 187–190 (EEFI), and Glu195 each bind ATP. The region spanning 111–301 (DLASNELNIR…EFELHLRAVL (191 aa)) is the ATP-grasp domain. Mg(2+) contacts are provided by Glu260 and Glu272. Residues Asp279, Lys349, and 356 to 357 (RR) contribute to the N(1)-(5-phospho-beta-D-ribosyl)glycinamide site.

This sequence belongs to the PurK/PurT family. In terms of assembly, homodimer.

It catalyses the reaction N(1)-(5-phospho-beta-D-ribosyl)glycinamide + formate + ATP = N(2)-formyl-N(1)-(5-phospho-beta-D-ribosyl)glycinamide + ADP + phosphate + H(+). Its pathway is purine metabolism; IMP biosynthesis via de novo pathway; N(2)-formyl-N(1)-(5-phospho-D-ribosyl)glycinamide from N(1)-(5-phospho-D-ribosyl)glycinamide (formate route): step 1/1. Involved in the de novo purine biosynthesis. Catalyzes the transfer of formate to 5-phospho-ribosyl-glycinamide (GAR), producing 5-phospho-ribosyl-N-formylglycinamide (FGAR). Formate is provided by PurU via hydrolysis of 10-formyl-tetrahydrofolate. The chain is Formate-dependent phosphoribosylglycinamide formyltransferase from Prochlorococcus marinus (strain NATL1A).